The sequence spans 153 residues: MFQPCCSKSTMSRSGVAVNDSALQAFNELKLGKKVTFIIYKINDAKTEIVVEEEGTTDSYDTFLGKLPENDCRYAVYDFEYEISSGEGKRSKLVFFTWSPDTAPVRSKMIYASSKDSLRRALTGISTEIQGTDFSEVAYESVLERVSRGAGSH.

The ADF-H domain maps to Gly-15–Ser-147.

It belongs to the actin-binding proteins ADF family.

The protein localises to the cytoplasm. The protein resides in the cytoskeleton. Its subcellular location is the nucleus matrix. Controls reversibly actin polymerization and depolymerization in a pH-sensitive manner. It has the ability to bind G- and F-actin in a 1:1 ratio of cofilin to actin. Binding to F-actin is regulated by tropomyosin. It is the major component of intranuclear and cytoplasmic actin rods. Required for accumulation of actin at the cell division site via depolymerizing actin at the cell ends. In association with myosin II has a role in the assembly of the contractile ring via severing actin filaments. Involved in the maintenance of the contractile ring once formed. In association with profilin and capping protein, has a role in the mitotic reorganization of the actin cytoskeleton. This Yarrowia lipolytica (strain CLIB 122 / E 150) (Yeast) protein is Cofilin (COF1).